A 163-amino-acid polypeptide reads, in one-letter code: Endoribonuclease YbeY (163 aa).

The Zn(2+) site is built by H126, H130, and H136.

It belongs to the endoribonuclease YbeY family. Zn(2+) is required as a cofactor.

It is found in the cytoplasm. In terms of biological role, single strand-specific metallo-endoribonuclease involved in late-stage 70S ribosome quality control and in maturation of the 3' terminus of the 16S rRNA. The polypeptide is Endoribonuclease YbeY (Chelativorans sp. (strain BNC1)).